The chain runs to 188 residues: Elongation factor P (188 aa).

This sequence belongs to the elongation factor P family.

It localises to the cytoplasm. The protein operates within protein biosynthesis; polypeptide chain elongation. Its function is as follows. Involved in peptide bond synthesis. Stimulates efficient translation and peptide-bond synthesis on native or reconstituted 70S ribosomes in vitro. Probably functions indirectly by altering the affinity of the ribosome for aminoacyl-tRNA, thus increasing their reactivity as acceptors for peptidyl transferase. The polypeptide is Elongation factor P (Leptospira biflexa serovar Patoc (strain Patoc 1 / Ames)).